A 64-amino-acid chain; its full sequence is Conotoxin VnMLCL-033 (64 aa).

A signal peptide spans 1–19 (MLCLPVFIILLLLASPAAP). Residues 20 to 43 (NPLQTRIQSNLIRAGPEDANIKTD) constitute a propeptide that is removed on maturation. Ile-63 carries the post-translational modification Isoleucine amide.

This sequence belongs to the conotoxin T superfamily. As to expression, expressed by the venom duct.

Its subcellular location is the secreted. This Conus ventricosus (Mediterranean cone) protein is Conotoxin VnMLCL-033.